A 217-amino-acid polypeptide reads, in one-letter code: Adenylate kinase (217 aa).

Gly11–Thr16 is a binding site for ATP. Residues Ser31 to Val60 form an NMP region. AMP is bound by residues Thr32, Arg37, Asn58 to Val60, Gly86 to Arg89, and Gln93. Residues Ala127–Asp165 form an LID region. Position 128 (Arg128) interacts with ATP. The Zn(2+) site is built by Cys131 and Cys134. Residue Thr137–Tyr138 participates in ATP binding. Residues Cys151 and Cys154 each coordinate Zn(2+). The AMP site is built by Arg162 and Arg173. Gln201 contacts ATP.

This sequence belongs to the adenylate kinase family. As to quaternary structure, monomer.

It is found in the cytoplasm. It catalyses the reaction AMP + ATP = 2 ADP. It participates in purine metabolism; AMP biosynthesis via salvage pathway; AMP from ADP: step 1/1. Catalyzes the reversible transfer of the terminal phosphate group between ATP and AMP. Plays an important role in cellular energy homeostasis and in adenine nucleotide metabolism. The polypeptide is Adenylate kinase (Lactobacillus johnsonii (strain CNCM I-12250 / La1 / NCC 533)).